Reading from the N-terminus, the 403-residue chain is Serine/threonine transporter SstT (403 aa).

10 helical membrane-spanning segments follow: residues 15–35 (LGLIPQIVIGIALGVGVAIVW), 49–69 (FISALKAVAPILVFLLVMTAI), 85–105 (LLYVVGTLCAALVAVLASFIF), 142–162 (ALLNANFVGILAWAMGLGMML), 183–203 (IVQLVIRCAPLGIFGLVAGTL), 218–238 (LAVIVGCMLFVALVTNPLIVF), 246–268 (YPLVFACLRGSAITAFFTRSSAA), 289–309 (ISIPLGATINMAGAAVTISVI), 317–337 (LGIGVDFATALLLCVVASLAA), and 362–382 (PDVAMQVVAIGFVISVVQDAT).

This sequence belongs to the dicarboxylate/amino acid:cation symporter (DAACS) (TC 2.A.23) family.

The protein resides in the cell inner membrane. The catalysed reaction is L-serine(in) + Na(+)(in) = L-serine(out) + Na(+)(out). The enzyme catalyses L-threonine(in) + Na(+)(in) = L-threonine(out) + Na(+)(out). Its function is as follows. Involved in the import of serine and threonine into the cell, with the concomitant import of sodium (symport system). The sequence is that of Serine/threonine transporter SstT from Chromohalobacter salexigens (strain ATCC BAA-138 / DSM 3043 / CIP 106854 / NCIMB 13768 / 1H11).